We begin with the raw amino-acid sequence, 455 residues long: uncharacterized protein (455 aa).

Residues asparagine 42, asparagine 49, and asparagine 70 are each glycosylated (N-linked (GlcNAc...) asparagine). Helical transmembrane passes span 127–147 (AILI…TWIF), 153–173 (SLLD…MFRI), 177–197 (ICAL…ITYY), and 377–397 (YKFC…EIIF). N-linked (GlcNAc...) asparagine glycosylation is present at asparagine 403.

It localises to the membrane. This is an uncharacterized protein from Caenorhabditis elegans.